The following is a 344-amino-acid chain: Adenosine deaminase (344 aa).

Zn(2+) is bound by residues His-14 and His-16. Substrate is bound by residues His-16, Asp-18, and Gly-177. Position 204 (His-204) interacts with Zn(2+). Glu-207 (proton donor) is an active-site residue. Asp-284 serves as a coordination point for Zn(2+).

The protein belongs to the metallo-dependent hydrolases superfamily. Adenosine and AMP deaminases family. Adenosine deaminase subfamily. Zn(2+) serves as cofactor.

The catalysed reaction is adenosine + H2O + H(+) = inosine + NH4(+). It carries out the reaction 2'-deoxyadenosine + H2O + H(+) = 2'-deoxyinosine + NH4(+). Functionally, catalyzes the hydrolytic deamination of adenosine and 2-deoxyadenosine. This Haemophilus ducreyi (strain 35000HP / ATCC 700724) protein is Adenosine deaminase.